The primary structure comprises 297 residues: Transmembrane protein 178A (297 aa).

The first 25 residues, 1–25 (MEPRALVTALSLGLSLCSLGLLVTA), serve as a signal peptide directing secretion. Residues 26 to 179 (IFTDHWYETD…LLHLRRITAG (154 aa)) lie on the Extracellular side of the membrane. A compositionally biased stretch (basic and acidic residues) spans 41–57 (ESCERSRAGADPPDQKN). The tract at residues 41-86 (ESCERSRAGADPPDQKNRLMPLSHLPLRDSPPLGRRLLPGGPGRSD) is disordered. The segment covering 68–79 (RDSPPLGRRLLP) has biased composition (low complexity). Asparagine 158 is a glycosylation site (N-linked (GlcNAc...) asparagine). A helical transmembrane segment spans residues 180 to 200 (FLGMAVAVLLCGCIVATVSFF). Topologically, residues 201-208 (WEESLTQH) are cytoplasmic. Residues 209-229 (VAGLLFLMTGIFCTISLCTYA) traverse the membrane as a helical segment. At 230 to 257 (ASVSYDLNRVPKLIYSLPHDVEHGYSWS) the chain is on the extracellular side. The chain crosses the membrane as a helical span at residues 258-278 (IFCAWCSLGFIVAAGGLCIAY). Topologically, residues 279-297 (PFISRTKIAHLKSGRDSTV) are cytoplasmic.

Belongs to the TMEM178 family. In terms of assembly, interacts with STIM1. As to expression, highly expressed in the bone and its expression increases during osteoclastogenesis.

The protein localises to the endoplasmic reticulum membrane. Its function is as follows. Acts as a negative regulator of osteoclast differentiation in basal and inflammatory conditions by regulating TNFSF11-induced Ca (2+) fluxes, thereby controlling the induction of NFATC1. The sequence is that of Transmembrane protein 178A (Tmem178a) from Mus musculus (Mouse).